The sequence spans 366 residues: MAGPAWISKVSRLLGAFHNQKQVTRGFAGGVKTVTLIPGDGIGPEISAAVMKIFDAAKAPIQWEERNVAAIQGPGGKWMIPPEAKESMDKNKMGLKGPLKTPIAAGHPSMNLLLRKTFDLYANVRPCVSIEGYKTPYHDVNIVTIRENTEGEYSGIEHVIVDGVVQSIKLITEAASKRIAEFAFEYARNNHRSNVTAVHKANIMRMSDGLFLQKCREVAENCKDIKFNEMYLDTVCLNMVQDPSQFDVLVMPNLYGDILSDLCAGLIGGLGVTPSGNIGANGVAIFESVHGTAPDIAGKDMANPTALLLSAVMMLRHMGLFDHAAKIETACFATIKDGKSLTKDLGGNSKCSDFTEEICRRVKDLD.

A mitochondrion-targeting transit peptide spans 1 to 27; that stretch reads MAGPAWISKVSRLLGAFHNQKQVTRGF. The residue at position 77 (Lys-77) is an N6-succinyllysine. Thr-101 carries the phosphothreonine modification. Positions 115, 125, and 146 each coordinate substrate. Lys-223 carries the N6-acetyllysine modification. 3 residues coordinate Mg(2+): Asp-233, Asp-257, and Asp-261. The residue at position 343 (Lys-343) is an N6-acetyllysine; alternate. Lys-343 bears the N6-succinyllysine; alternate mark. Lys-350 carries the post-translational modification N6-succinyllysine.

This sequence belongs to the isocitrate and isopropylmalate dehydrogenases family. Heterooligomer of subunits alpha (IDH3A), beta (IDH3B), and gamma (IDH3G) in the apparent ratio of 2:1:1. The heterodimer containing one IDH3A and one IDH3B subunit and the heterodimer containing one IDH3A and one IDH3G subunit assemble into a heterotetramer (which contains two subunits of IDH3A, one of IDH3B and one of IDH3G) and further into the heterooctamer. Mg(2+) is required as a cofactor. Mn(2+) serves as cofactor.

Its subcellular location is the mitochondrion. The catalysed reaction is D-threo-isocitrate + NAD(+) = 2-oxoglutarate + CO2 + NADH. Its activity is regulated as follows. The heterotetramer and the heterodimer composed of IDH3A and IDH3G subunits can be allosterically activated by citrate (CIT) or/and ADP, and the two activators can act independently or synergistically. The heterodimer composed of IDH3A and IDH3B subunits cannot be allosterically regulated and the allosteric regulation of the heterotetramer is through the IDH3G subunit and not the IDH3B subunit. The IDH3G subunit contains the allosteric site which consists of a CIT-binding site and an ADP-binding site, and the binding of CIT and ADP causes conformational changes at the allosteric site which are transmitted to the active site in the catalytic subunit (IDH3A) through a cascade of conformational changes at the heterodimer interface, leading to stabilization of the isocitrate-binding at the active site and thus activation of the enzyme. ATP can activate the heterotetramer and the heterodimer composed of IDH3A and IDH3G subunits at low concentrations but inhibits their activities at high concentrations, whereas ATP exhibits only inhibitory effect on the heterodimer composed of IDH3A and IDH3B subunits. Functionally, catalytic subunit of the enzyme which catalyzes the decarboxylation of isocitrate (ICT) into alpha-ketoglutarate. The heterodimer composed of the alpha (IDH3A) and beta (IDH3B) subunits and the heterodimer composed of the alpha (IDH3A) and gamma (IDH3G) subunits, have considerable basal activity but the full activity of the heterotetramer (containing two subunits of IDH3A, one of IDH3B and one of IDH3G) requires the assembly and cooperative function of both heterodimers. The polypeptide is Isocitrate dehydrogenase [NAD] subunit alpha, mitochondrial (Bos taurus (Bovine)).